Here is a 469-residue protein sequence, read N- to C-terminus: tRNA(Ile)-lysidine synthase (469 aa).

Position 26–31 (26–31 (SGGPDS)) interacts with ATP.

It belongs to the tRNA(Ile)-lysidine synthase family.

It is found in the cytoplasm. It carries out the reaction cytidine(34) in tRNA(Ile2) + L-lysine + ATP = lysidine(34) in tRNA(Ile2) + AMP + diphosphate + H(+). Ligates lysine onto the cytidine present at position 34 of the AUA codon-specific tRNA(Ile) that contains the anticodon CAU, in an ATP-dependent manner. Cytidine is converted to lysidine, thus changing the amino acid specificity of the tRNA from methionine to isoleucine. The chain is tRNA(Ile)-lysidine synthase from Clostridium perfringens (strain ATCC 13124 / DSM 756 / JCM 1290 / NCIMB 6125 / NCTC 8237 / Type A).